The following is a 100-amino-acid chain: Urease subunit gamma (100 aa).

It belongs to the urease gamma subunit family. In terms of assembly, heterotrimer of UreA (gamma), UreB (beta) and UreC (alpha) subunits. Three heterotrimers associate to form the active enzyme.

The protein resides in the cytoplasm. The catalysed reaction is urea + 2 H2O + H(+) = hydrogencarbonate + 2 NH4(+). The protein operates within nitrogen metabolism; urea degradation; CO(2) and NH(3) from urea (urease route): step 1/1. The sequence is that of Urease subunit gamma from Cereibacter sphaeroides (strain ATCC 17029 / ATH 2.4.9) (Rhodobacter sphaeroides).